Consider the following 62-residue polypeptide: Small ribosomal subunit protein bS21 (62 aa).

Positions 40–52 (KPSVKRKLKSEAA) are enriched in basic and acidic residues. Residues 40-62 (KPSVKRKLKSEAARKRKNKRRRY) are disordered. Basic residues predominate over residues 53–62 (RKRKNKRRRY).

The protein belongs to the bacterial ribosomal protein bS21 family.

This Limosilactobacillus fermentum (strain NBRC 3956 / LMG 18251) (Lactobacillus fermentum) protein is Small ribosomal subunit protein bS21.